The sequence spans 497 residues: MTDLVPVYYAFAGVVAALLFYKWQSDPLRAIPTIGPSAPLLSYLGAIRFFKDASGVLQEGYDKYNVFKVAMIDRWAVVVSGAKMNEELRSIPDDQMSFMDAADELVQTKYTIAPDVLIHPIHITVIKEQLTRNLAPLFHEVVKEVEAAMQELIPAKGDDWIEIDGYSTVTQIITRASSRVFVGFPLCQNAEYLRIATTYSAEVMKGAMIMSVLPDFLKHIVGPLLPWSRRALRRAAPFLLPIITERRRLLKEYGRDWEDKPNDLLMWIIEEARRVGREDSTDLMVQGIMASNFTAIHTSSLTFTHALYHLAANPEYIQSLREEIEEVIRTDGWTKVSMGSMWKLDSFLKESHRVNGISGISVMRLALKDVTFSDGTFIPAGTFVAAAATSTHHDEENYSDATVFKPFRFSDMRASESEKNKHHYVSTSAEYIGFGHGKHACPGRFFAANELKIMLASIVLNYDVKFEDEGKRPANVWFATTVLPAPGAKVMFRKRQT.

Residues 1–21 (MTDLVPVYYAFAGVVAALLFY) form a helical membrane-spanning segment. N-linked (GlcNAc...) asparagine glycans are attached at residues Asn292 and Asn397. Position 441 (Cys441) interacts with heme.

The protein belongs to the cytochrome P450 family. It depends on heme as a cofactor.

The protein resides in the membrane. Its pathway is secondary metabolite biosynthesis. Its function is as follows. Cytochrome P450 monooxygenase that is able to use dehydroabietic acid and testosterone as substrates for oxidation, suggesting that the natural substrate(s) may be structurally related to steroid compounds. The chain is Cytochrome P450 monooxygenase 151 from Postia placenta (strain ATCC 44394 / Madison 698-R) (Brown rot fungus).